The primary structure comprises 29 residues: Glucagon (29 aa).

It belongs to the glucagon family.

It localises to the secreted. In terms of biological role, glucagon plays a key role in glucose metabolism and homeostasis. Regulates blood glucose by increasing gluconeogenesis and decreasing glycolysis. The sequence is that of Glucagon (GCG) from Meleagris gallopavo (Wild turkey).